The following is a 291-amino-acid chain: Protease HtpX (291 aa).

2 helical membrane passes run isoleucine 4–isoleucine 24 and leucine 36–methionine 56. Histidine 143 serves as a coordination point for Zn(2+). Glutamate 144 is a catalytic residue. Histidine 147 lines the Zn(2+) pocket. 2 consecutive transmembrane segments (helical) span residues glycine 151–serine 171 and phenylalanine 199–tryptophan 219. Glutamate 225 is a Zn(2+) binding site.

This sequence belongs to the peptidase M48B family. It depends on Zn(2+) as a cofactor.

It localises to the cell inner membrane. The polypeptide is Protease HtpX (Aliivibrio fischeri (strain ATCC 700601 / ES114) (Vibrio fischeri)).